The sequence spans 411 residues: Short chain dehydrogenase ausT (411 aa).

Positions 105, 137, 249, and 253 each coordinate NADP(+). The active-site Proton donor is the Tyr249. Residue Tyr263 is the Proton donor of the active site.

It belongs to the short-chain dehydrogenases/reductases (SDR) family.

Its pathway is secondary metabolite biosynthesis; terpenoid biosynthesis. Short chain dehydrogenase; part of the gene cluster that mediates the biosynthesis of calidodehydroaustin, a fungal meroterpenoid. The first step of the pathway is the synthesis of 3,5-dimethylorsellinic acid by the polyketide synthase ausA. 3,5-dimethylorsellinic acid is then prenylated by the polyprenyl transferase ausN. Further epoxidation by the FAD-dependent monooxygenase ausM and cyclization by the probable terpene cyclase ausL lead to the formation of protoaustinoid A. Protoaustinoid A is then oxidized to spiro-lactone preaustinoid A3 by the combined action of the FAD-binding monooxygenases ausB and ausC, and the dioxygenase ausE. Acid-catalyzed keto-rearrangement and ring contraction of the tetraketide portion of preaustinoid A3 by ausJ lead to the formation of preaustinoid A4. The aldo-keto reductase ausK, with the help of ausH, is involved in the next step by transforming preaustinoid A4 into isoaustinone which is in turn hydroxylated by the P450 monooxygenase ausI to form austinolide. The cytochrome P450 monooxygenase ausG modifies austinolide to austinol. Austinol is further acetylated to austin by the O-acetyltransferase ausP, which spontaneously changes to dehydroaustin. The cytochrome P450 monooxygenase ausR then converts dehydroaustin is into 7-dehydrodehydroaustin. The hydroxylation catalyzed by ausR permits the O-acetyltransferase ausQ to add an additional acetyl group to the molecule, leading to the formation of acetoxydehydroaustin. The short chain dehydrogenase ausT catalyzes the reduction of the double bond present between carbon atoms 1 and 2 to convert 7-dehydrodehydroaustin into 1,2-dihydro-7-hydroxydehydroaustin. AusQ catalyzes not only an acetylation reaction but also the addition of the PKS ausV diketide product to 1,2-dihydro-7-hydroxydehydroaustin, forming precalidodehydroaustin. Finally, the iron/alpha-ketoglutarate-dependent dioxygenase converts precalidodehydroaustin into calidodehydroaustin. The chain is Short chain dehydrogenase ausT from Aspergillus calidoustus.